A 60-amino-acid chain; its full sequence is UPF0434 protein KPN78578_09190 (60 aa).

The protein belongs to the UPF0434 family.

The sequence is that of UPF0434 protein KPN78578_09190 from Klebsiella pneumoniae subsp. pneumoniae (strain ATCC 700721 / MGH 78578).